Here is a 306-residue protein sequence, read N- to C-terminus: D-alanine--D-alanine ligase B (306 aa).

Active-site residues include glutamate 15 and serine 150. The region spanning 101-303 (KLLWQGAGLP…FSQLVVRILE (203 aa)) is the ATP-grasp domain. 134–189 (ISALGLPVIVKPSREGSSVGMSKVVAENALQDALRLAFQHDEEVLIEKWLSGPEFT) serves as a coordination point for ATP. 3 residues coordinate Mg(2+): aspartate 257, glutamate 270, and asparagine 272. Serine 281 is an active-site residue.

Belongs to the D-alanine--D-alanine ligase family. In terms of assembly, monomer. Mg(2+) is required as a cofactor. Requires Mn(2+) as cofactor.

Its subcellular location is the cytoplasm. The catalysed reaction is 2 D-alanine + ATP = D-alanyl-D-alanine + ADP + phosphate + H(+). It participates in cell wall biogenesis; peptidoglycan biosynthesis. Cell wall formation. The polypeptide is D-alanine--D-alanine ligase B (ddlB) (Escherichia coli O157:H7).